Here is a 1427-residue protein sequence, read N- to C-terminus: DNA-directed RNA polymerase subunit beta' (1427 aa).

Residues Cys66, Cys68, Cys81, and Cys84 each contribute to the Zn(2+) site. Mg(2+) contacts are provided by Asp472, Asp474, and Asp476. The Zn(2+) site is built by Cys815, Cys889, Cys896, and Cys899.

This sequence belongs to the RNA polymerase beta' chain family. The RNAP catalytic core consists of 2 alpha, 1 beta, 1 beta' and 1 omega subunit. When a sigma factor is associated with the core the holoenzyme is formed, which can initiate transcription. It depends on Mg(2+) as a cofactor. Zn(2+) is required as a cofactor.

It catalyses the reaction RNA(n) + a ribonucleoside 5'-triphosphate = RNA(n+1) + diphosphate. Functionally, DNA-dependent RNA polymerase catalyzes the transcription of DNA into RNA using the four ribonucleoside triphosphates as substrates. This chain is DNA-directed RNA polymerase subunit beta', found in Bacteroides fragilis (strain YCH46).